The sequence spans 1700 residues: Balbiani ring protein 3 (1700 aa).

Positions 1–20 are cleaved as a signal peptide; sequence MKTLSSLLLVLAVNVLLIQA.

Salivary gland.

The protein localises to the secreted. Used by the larvae to construct a supramolecular structure, the larval tube. Balbiani ring protein 3 could play a role as a transport protein that binds to other proteins intracellularly and in the gland lumen in order to prevent these from forming water-insoluble fibers too early. This is Balbiani ring protein 3 (BR3) from Chironomus tentans (Midge).